The primary structure comprises 198 residues: Protein GrpE (198 aa).

A compositionally biased stretch (basic and acidic residues) spans 1-21 (MMKKAEDPLQDREGTIQEHTE). The tract at residues 1–56 (MMKKAEDPLQDREGTIQEHTEGQAGTAAADQSAAVETPESRIAGLEREVQAEKEQN) is disordered. The span at 22–34 (GQAGTAAADQSAA) shows a compositional bias: low complexity. Positions 44 to 56 (GLEREVQAEKEQN) are enriched in basic and acidic residues.

Belongs to the GrpE family. In terms of assembly, homodimer.

It localises to the cytoplasm. Functionally, participates actively in the response to hyperosmotic and heat shock by preventing the aggregation of stress-denatured proteins, in association with DnaK and GrpE. It is the nucleotide exchange factor for DnaK and may function as a thermosensor. Unfolded proteins bind initially to DnaJ; upon interaction with the DnaJ-bound protein, DnaK hydrolyzes its bound ATP, resulting in the formation of a stable complex. GrpE releases ADP from DnaK; ATP binding to DnaK triggers the release of the substrate protein, thus completing the reaction cycle. Several rounds of ATP-dependent interactions between DnaJ, DnaK and GrpE are required for fully efficient folding. The sequence is that of Protein GrpE from Chlorobium luteolum (strain DSM 273 / BCRC 81028 / 2530) (Pelodictyon luteolum).